The following is a 335-amino-acid chain: Vitamin B12 import system permease protein BtuC (335 aa).

Transmembrane regions (helical) follow at residues 25–45, 67–87, 95–114, 118–140, 153–173, 200–220, 243–263, 286–306, and 308–328; these read LVVI…IWLW, LAVL…QALF, GLLG…VLLG, LPIW…LLLG, LLVG…AVYF, LVLA…VLNF, VLAI…ISFI, CALA…IALF, and AELP…IWLL.

The protein belongs to the binding-protein-dependent transport system permease family. FecCD subfamily. In terms of assembly, the complex is composed of two ATP-binding proteins (BtuD), two transmembrane proteins (BtuC) and a solute-binding protein (BtuF).

The protein localises to the cell inner membrane. In terms of biological role, part of the ABC transporter complex BtuCDF involved in vitamin B12 import. Involved in the translocation of the substrate across the membrane. This is Vitamin B12 import system permease protein BtuC from Yersinia enterocolitica serotype O:8 / biotype 1B (strain NCTC 13174 / 8081).